The following is a 379-amino-acid chain: Cytochrome b (379 aa).

Transmembrane regions (helical) follow at residues 33–53 (FGSL…FLAM), 77–98 (WLIR…FIHV), 113–133 (WNIG…GYVL), and 178–198 (FFAF…VHLL). His-83 and His-97 together coordinate heme b. 2 residues coordinate heme b: His-182 and His-196. His-201 is an a ubiquinone binding site. Helical transmembrane passes span 226 to 246 (IKDL…TLFF), 288 to 308 (LGGV…PLLN), 320 to 340 (VTQV…WIGG), and 347 to 367 (FTMI…ILIP).

It belongs to the cytochrome b family. The cytochrome bc1 complex contains 11 subunits: 3 respiratory subunits (MT-CYB, CYC1 and UQCRFS1), 2 core proteins (UQCRC1 and UQCRC2) and 6 low-molecular weight proteins (UQCRH/QCR6, UQCRB/QCR7, UQCRQ/QCR8, UQCR10/QCR9, UQCR11/QCR10 and a cleavage product of UQCRFS1). This cytochrome bc1 complex then forms a dimer. Requires heme b as cofactor.

The protein localises to the mitochondrion inner membrane. Its function is as follows. Component of the ubiquinol-cytochrome c reductase complex (complex III or cytochrome b-c1 complex) that is part of the mitochondrial respiratory chain. The b-c1 complex mediates electron transfer from ubiquinol to cytochrome c. Contributes to the generation of a proton gradient across the mitochondrial membrane that is then used for ATP synthesis. This is Cytochrome b (MT-CYB) from Akodon subfuscus (Puno grass mouse).